We begin with the raw amino-acid sequence, 257 residues long: Putative hydro-lyase Bamb_5282 (257 aa).

It belongs to the D-glutamate cyclase family.

This chain is Putative hydro-lyase Bamb_5282, found in Burkholderia ambifaria (strain ATCC BAA-244 / DSM 16087 / CCUG 44356 / LMG 19182 / AMMD) (Burkholderia cepacia (strain AMMD)).